Here is a 431-residue protein sequence, read N- to C-terminus: Na(+)-translocating NADH-quinone reductase subunit F (431 aa).

A helical transmembrane segment spans residues 10–30 (IFVASAAFCSLGLILVAVILL). Residues 41–133 (CKLKINNDDS…DLCLEVEERY (93 aa)) form the 2Fe-2S ferredoxin-type domain. [2Fe-2S] cluster contacts are provided by Cys-76, Cys-82, Cys-85, and Cys-117. The region spanning 136–286 (ASSWEGTVVS…SGPYGESFMK (151 aa)) is the FAD-binding FR-type domain.

The protein belongs to the NqrF family. As to quaternary structure, composed of six subunits; NqrA, NqrB, NqrC, NqrD, NqrE and NqrF. [2Fe-2S] cluster serves as cofactor. The cofactor is FAD.

The protein localises to the cell inner membrane. The catalysed reaction is a ubiquinone + n Na(+)(in) + NADH + H(+) = a ubiquinol + n Na(+)(out) + NAD(+). NQR complex catalyzes the reduction of ubiquinone-1 to ubiquinol by two successive reactions, coupled with the transport of Na(+) ions from the cytoplasm to the periplasm. The first step is catalyzed by NqrF, which accepts electrons from NADH and reduces ubiquinone-1 to ubisemiquinone by a one-electron transfer pathway. The chain is Na(+)-translocating NADH-quinone reductase subunit F from Chlamydia trachomatis serovar A (strain ATCC VR-571B / DSM 19440 / HAR-13).